Consider the following 49-residue polypeptide: Large ribosomal subunit protein bL33 (49 aa).

Belongs to the bacterial ribosomal protein bL33 family.

The chain is Large ribosomal subunit protein bL33 from Thermosipho melanesiensis (strain DSM 12029 / CIP 104789 / BI429).